The chain runs to 317 residues: Coproporphyrinogen-III oxidase, aerobic 1 (317 aa).

Residues 38–47 (VLRDGAIFEQ) form an important for dimerization region. Serine 82 is a substrate binding site. Histidine 96 acts as the Proton donor in catalysis. Residues 98–100 (NYR) and 269–274 (NGRTES) contribute to the substrate site. Residues 251–286 (YVEFNLVYDRGTIFGLQTNGRTESILMSLPPLVRWE) are important for dimerization.

Belongs to the aerobic coproporphyrinogen-III oxidase family. As to quaternary structure, homodimer.

The protein localises to the cytoplasm. The catalysed reaction is coproporphyrinogen III + O2 + 2 H(+) = protoporphyrinogen IX + 2 CO2 + 2 H2O. It functions in the pathway porphyrin-containing compound metabolism; protoporphyrin-IX biosynthesis; protoporphyrinogen-IX from coproporphyrinogen-III (O2 route): step 1/1. Functionally, key enzyme in heme biosynthesis. Catalyzes the oxidative decarboxylation of propionic acid side chains of rings A and B of coproporphyrinogen III. The polypeptide is Coproporphyrinogen-III oxidase, aerobic 1 (Nostoc sp. (strain PCC 7120 / SAG 25.82 / UTEX 2576)).